The following is a 264-amino-acid chain: Putative hydroxypyruvate isomerase (264 aa).

Active-site proton donor/acceptor residues include Glu-145 and Glu-243.

It belongs to the hyi family.

The catalysed reaction is 3-hydroxypyruvate = 2-hydroxy-3-oxopropanoate. Its function is as follows. Catalyzes the reversible isomerization between hydroxypyruvate and 2-hydroxy-3-oxopropanoate (also termed tartronate semialdehyde). In Drosophila melanogaster (Fruit fly), this protein is Putative hydroxypyruvate isomerase (Gip).